Here is a 374-residue protein sequence, read N- to C-terminus: Chaperone protein DnaJ (374 aa).

The J domain maps to 4-68; that stretch reads DYYDILGVSR…QMRGRYDQFG (65 aa). The CR-type zinc-finger motif lies at 133–215; that stretch reads GGEQQIRISH…CGGRGQNQVS (83 aa). The Zn(2+) site is built by Cys-146, Cys-149, Cys-163, Cys-166, Cys-189, Cys-192, Cys-203, and Cys-206. CXXCXGXG motif repeat units follow at residues 146-153, 163-170, 189-196, and 203-210; these read CKTCEGTG, CSTCQGSG, CPTCNGQG, and CDSCGGRG.

This sequence belongs to the DnaJ family. As to quaternary structure, homodimer. Zn(2+) serves as cofactor.

It is found in the cytoplasm. Its function is as follows. Participates actively in the response to hyperosmotic and heat shock by preventing the aggregation of stress-denatured proteins and by disaggregating proteins, also in an autonomous, DnaK-independent fashion. Unfolded proteins bind initially to DnaJ; upon interaction with the DnaJ-bound protein, DnaK hydrolyzes its bound ATP, resulting in the formation of a stable complex. GrpE releases ADP from DnaK; ATP binding to DnaK triggers the release of the substrate protein, thus completing the reaction cycle. Several rounds of ATP-dependent interactions between DnaJ, DnaK and GrpE are required for fully efficient folding. Also involved, together with DnaK and GrpE, in the DNA replication of plasmids through activation of initiation proteins. In Acaryochloris marina (strain MBIC 11017), this protein is Chaperone protein DnaJ.